Consider the following 529-residue polypeptide: Retinoic acid-induced protein 2 (529 aa).

2 disordered regions span residues 1–21 and 400–419; these read MDDLQSQNLSMDMTDSPPTLA and SHSSNSNGTEMVSQPSHPGS. A compositionally biased stretch (polar residues) spans 407–416; it reads GTEMVSQPSH.

This Mus musculus (Mouse) protein is Retinoic acid-induced protein 2 (Rai2).